Reading from the N-terminus, the 345-residue chain is NADPH dehydrogenase (345 aa).

Residue 23–26 (SPMC) coordinates FMN. A substrate-binding site is contributed by tyrosine 28. Residues alanine 60 and glutamine 102 each coordinate FMN. 164 to 167 (HGAH) serves as a coordination point for substrate. FMN-binding positions include arginine 215 and 307-308 (GR).

Belongs to the NADH:flavin oxidoreductase/NADH oxidase family. NamA subfamily. In terms of assembly, homotetramer. Requires FMN as cofactor.

It catalyses the reaction A + NADPH + H(+) = AH2 + NADP(+). Catalyzes the reduction of the double bond of an array of alpha,beta-unsaturated aldehydes and ketones. It also reduces the nitro group of nitroester and nitroaromatic compounds. It could have a role in detoxification processes. In Bacillus cereus (strain ZK / E33L), this protein is NADPH dehydrogenase.